The sequence spans 568 residues: Tyrosine-protein kinase transforming protein Src (568 aa).

Residues 1-58 (MGSSKSKPKDPSQRRRSLEPPDSTHHGGFPASQTPNKTAAPDTHRTPSRSFGTVATEP) are disordered. Residue glycine 2 is the site of N-myristoyl glycine; by host attachment. Residues 7–25 (KPKDPSQRRRSLEPPDSTH) show a composition bias toward basic and acidic residues. An SH3 domain is found at 81 to 142 (GGVTTFVALY…PSNYVAPSDS (62 aa)). Positions 148-245 (WYFGKITRRE…GLCHRLTNVC (98 aa)) constitute an SH2 domain. The Protein kinase domain maps to 267-520 (LRLEVKLGQG…YLQAFLEDYF (254 aa)). Residues 273 to 281 (LGQGCFGEV) and lysine 295 contribute to the ATP site. The Proton acceptor role is filled by aspartate 386. Tyrosine 416 is subject to Phosphotyrosine; by autocatalysis.

Belongs to the protein kinase superfamily. Tyr protein kinase family. SRC subfamily. The phosphorylated form is termed pp60v-src.

It carries out the reaction L-tyrosyl-[protein] + ATP = O-phospho-L-tyrosyl-[protein] + ADP + H(+). In terms of biological role, this phosphoprotein, required for both the initiation and the maintenance of neoplastic transformation, is a protein kinase that catalyzes the phosphorylation of tyrosine residues in vitro. The sequence is that of Tyrosine-protein kinase transforming protein Src (V-SRC) from Galliformes.